We begin with the raw amino-acid sequence, 513 residues long: Maturase K (513 aa).

It belongs to the intron maturase 2 family. MatK subfamily.

The protein localises to the plastid. The protein resides in the chloroplast. Usually encoded in the trnK tRNA gene intron. Probably assists in splicing its own and other chloroplast group II introns. The protein is Maturase K of Cyrilla racemiflora (Swamp titi).